The following is a 254-amino-acid chain: Ornithine decarboxylase antizyme (254 aa).

It belongs to the ODC antizyme family. In terms of assembly, interacts with ODC1 and thereby sterically blocks ODC homodimerization.

Ornithine decarboxylase (ODC) antizyme protein that negatively regulates ODC activity and intracellular polyamine biosynthesis and uptake in response to increased intracellular polyamine levels. Binds to ODC monomers, inhibiting the assembly of the functional ODC homodimer, and targets the monomers for ubiquitin-independent proteolytic destruction by the 26S proteasome. Required for cellular differentiation in neuronal and myogenic lineages during embryonic development. This Drosophila melanogaster (Fruit fly) protein is Ornithine decarboxylase antizyme (Oda).